A 294-amino-acid polypeptide reads, in one-letter code: Chelated iron transport system membrane protein YfeC (294 aa).

8 helical membrane passes run 17 to 37 (AIWV…YLML), 51 to 71 (VVPG…GAFF), 93 to 113 (AIIG…VSLN), 140 to 160 (IIIL…LAVF), 169 to 189 (IGLS…ACTV), 194 to 214 (TVGA…AYLL), 221 to 241 (LLII…YLSF), and 246 to 266 (ATGG…FFFA).

This sequence belongs to the ABC-3 integral membrane protein family.

The protein localises to the cell inner membrane. Functionally, part of an ATP-driven transport system YfeABC for chelated iron. This is Chelated iron transport system membrane protein YfeC (yfeC) from Yersinia pestis.